Consider the following 260-residue polypeptide: Acetylglutamate kinase (260 aa).

Substrate contacts are provided by residues 46 to 47 (GG), R68, and N160.

It belongs to the acetylglutamate kinase family. ArgB subfamily.

The protein resides in the cytoplasm. It catalyses the reaction N-acetyl-L-glutamate + ATP = N-acetyl-L-glutamyl 5-phosphate + ADP. Its pathway is amino-acid biosynthesis; L-arginine biosynthesis; N(2)-acetyl-L-ornithine from L-glutamate: step 2/4. In terms of biological role, catalyzes the ATP-dependent phosphorylation of N-acetyl-L-glutamate. This Shewanella sp. (strain MR-7) protein is Acetylglutamate kinase.